A 424-amino-acid polypeptide reads, in one-letter code: CinA-like protein (424 aa).

Belongs to the CinA family.

This is CinA-like protein from Shewanella piezotolerans (strain WP3 / JCM 13877).